We begin with the raw amino-acid sequence, 386 residues long: Alkanesulfonate monooxygenase (386 aa).

The protein belongs to the SsuD family.

It carries out the reaction an alkanesulfonate + FMNH2 + O2 = an aldehyde + FMN + sulfite + H2O + 2 H(+). In terms of biological role, catalyzes the desulfonation of aliphatic sulfonates. The polypeptide is Alkanesulfonate monooxygenase (Paraburkholderia phytofirmans (strain DSM 17436 / LMG 22146 / PsJN) (Burkholderia phytofirmans)).